A 351-amino-acid chain; its full sequence is RCC1 repeat-containing protein C10F6.04 (351 aa).

RCC1 repeat units follow at residues 1 to 48 (MLLS…LLDE), 50 to 106 (SQLW…IVHA), 108 to 162 (RRRV…CVTN), and 163 to 212 (EGNL…VLQE).

The protein resides in the cytoplasm. Its subcellular location is the nucleus. The chain is RCC1 repeat-containing protein C10F6.04 from Schizosaccharomyces pombe (strain 972 / ATCC 24843) (Fission yeast).